A 799-amino-acid chain; its full sequence is MEELEILRKKLYSIQRQDNTQKLSERNCIEIIVKMIDLKMIDIIHSLDGKEYITPKQLENEIKDEILKCGGRVVVCDLQSILSIDIIHIEEALEKLKKRDKSIQIYQGEIMTRYYLDSILQEIQEQLQEVGKLHINDLSNRFSIGVDFLINLIEQNLKKFNRSLNNSTNNNNNNNNILLKNIIFDNQEVLYTQSHINRHYHKVIGLFSSITQPILINNVIKQHQNHYQLNERLVRQQLQELIENKRINGFIQGKASNAEFIPTIFSQSRLKWIDSFYHQNQFITFDSVSKLQINEPQSFLKNTFTDGLLLHSCFIHKSLIDKIDDNIIEIIENSNWLDLIPLLPPLTDKDISMIVSNCPNMKTNNAILLGNSFIISKSFVDRCFTLLQKTIQERMEKQQLILENIASSNIKKQQQSKSEIIDQKIETTTTTTTTTQPSKKKDNLINSDDDDNQDNNKKSSKGKNKKSKQQQSSIQKLINDSEDDYKVYNKKQENNNNNKKVDHLKEINQLLSKWYENMEEELVESLSQYLRPLVNQSWESMVKEAKEKLENETQKQRKQQLQQLNSQFFSLYNSFLLFRKGLQSLNDADDDNGKTIIALEKHLLKTVGINITNLLIEINANYHMLDKTTFETPSERSLILSQFPPQLSKSFEKLIQSLNKSTLNDFIDSLENVCSQSQIKLKSLDKKLEKQLLIENQNELEEQFLNEIDVGNQFQIIVNLMYIRYKNNYIFSPPRLIGKLVSTLVMDTSIDKEIITRLTKLHQEIVKLITNNKLSNQDNDNDSTELNDHIKFFKDLILN.

Residues 429 to 483 are disordered; sequence TTTTTTTQPSKKKDNLINSDDDDNQDNNKKSSKGKNKKSKQQQSSIQKLINDSED. A compositionally biased stretch (basic residues) spans 458–468; the sequence is KSSKGKNKKSK. The span at 469-478 shows a compositional bias: low complexity; it reads QQQSSIQKLI.

The protein belongs to the UFL1 family.

E3 UFM1-protein ligase that mediates ufmylation of target proteins. In Dictyostelium discoideum (Social amoeba), this protein is E3 UFM1-protein ligase 1 homolog.